A 260-amino-acid chain; its full sequence is tRNA pseudouridine synthase B (260 aa).

His44 lines the substrate pocket. The Nucleophile role is filled by Asp49. Substrate-binding residues include Tyr77, Tyr180, and Leu201.

It belongs to the pseudouridine synthase TruB family. Type 1 subfamily.

The enzyme catalyses uridine(55) in tRNA = pseudouridine(55) in tRNA. In terms of biological role, responsible for synthesis of pseudouridine from uracil-55 in the psi GC loop of transfer RNAs. The protein is tRNA pseudouridine synthase B of Blochmanniella pennsylvanica (strain BPEN).